Here is a 179-residue protein sequence, read N- to C-terminus: Large ribosomal subunit protein uL6 (179 aa).

The interval 151–179 (RKPEPYKGKGIKYDNEQIRRKAGKSGGKK) is disordered. Basic and acidic residues predominate over residues 152–169 (KPEPYKGKGIKYDNEQIR). Residues 170–179 (RKAGKSGGKK) are compositionally biased toward basic residues.

This sequence belongs to the universal ribosomal protein uL6 family. As to quaternary structure, part of the 50S ribosomal subunit.

This protein binds to the 23S rRNA, and is important in its secondary structure. It is located near the subunit interface in the base of the L7/L12 stalk, and near the tRNA binding site of the peptidyltransferase center. The polypeptide is Large ribosomal subunit protein uL6 (Nitratidesulfovibrio vulgaris (strain ATCC 29579 / DSM 644 / CCUG 34227 / NCIMB 8303 / VKM B-1760 / Hildenborough) (Desulfovibrio vulgaris)).